A 221-amino-acid chain; its full sequence is uncharacterized protein (221 aa).

The Extracellular segment spans residues 1–45; it reads MYAPIRSPITELNESTPSSIPVATSYATCSASFAKLVALLVDDMA. Residues 46–66 traverse the membrane as a helical segment; sequence GLSIVLSEIYIYFKLLFLIVI. At 67–221 the chain is on the cytoplasmic side; the sequence is TESIQNKLED…KYIVVIKVEQ (155 aa).

It localises to the host membrane. This is an uncharacterized protein from Acidianus filamentous virus 1 (isolate United States/Yellowstone) (AFV-1).